Reading from the N-terminus, the 202-residue chain is Orotate phosphoribosyltransferase (202 aa).

5-phospho-alpha-D-ribose 1-diphosphate contacts are provided by residues R94, K98, H100, and 120-128; that span reads EDLISTGGS. S124 serves as a coordination point for orotate.

This sequence belongs to the purine/pyrimidine phosphoribosyltransferase family. PyrE subfamily. As to quaternary structure, homodimer. The cofactor is Mg(2+).

It catalyses the reaction orotidine 5'-phosphate + diphosphate = orotate + 5-phospho-alpha-D-ribose 1-diphosphate. The protein operates within pyrimidine metabolism; UMP biosynthesis via de novo pathway; UMP from orotate: step 1/2. Functionally, catalyzes the transfer of a ribosyl phosphate group from 5-phosphoribose 1-diphosphate to orotate, leading to the formation of orotidine monophosphate (OMP). The protein is Orotate phosphoribosyltransferase of Staphylococcus haemolyticus (strain JCSC1435).